Reading from the N-terminus, the 505-residue chain is ATP synthase subunit alpha (505 aa).

The disordered stretch occupies residues 118-138 (VDGLGPINTTNTRPIESPAPG). ATP is bound at residue 172 to 179 (GDRQTGKT).

Belongs to the ATPase alpha/beta chains family. As to quaternary structure, F-type ATPases have 2 components, CF(1) - the catalytic core - and CF(0) - the membrane proton channel. CF(1) has five subunits: alpha(3), beta(3), gamma(1), delta(1), epsilon(1). CF(0) has three main subunits: a(1), b(2) and c(9-12). The alpha and beta chains form an alternating ring which encloses part of the gamma chain. CF(1) is attached to CF(0) by a central stalk formed by the gamma and epsilon chains, while a peripheral stalk is formed by the delta and b chains.

It is found in the cell membrane. It catalyses the reaction ATP + H2O + 4 H(+)(in) = ADP + phosphate + 5 H(+)(out). Produces ATP from ADP in the presence of a proton gradient across the membrane. The alpha chain is a regulatory subunit. The protein is ATP synthase subunit alpha of Bacillus cereus (strain ATCC 14579 / DSM 31 / CCUG 7414 / JCM 2152 / NBRC 15305 / NCIMB 9373 / NCTC 2599 / NRRL B-3711).